Reading from the N-terminus, the 237-residue chain is Increased recombination centers protein 6 (237 aa).

This sequence belongs to the IRC6 family.

In terms of biological role, involved in gross chromosomal rearrangements (GCRs) and telomere healing. The sequence is that of Increased recombination centers protein 6 (IRC6) from Saccharomyces cerevisiae (strain YJM789) (Baker's yeast).